The primary structure comprises 597 residues: Elongation factor 4 (597 aa).

The 183-residue stretch at 2–184 (DHIRNFSIIA…SLIAKVPPPK (183 aa)) folds into the tr-type G domain. GTP is bound by residues 14-19 (DHGKST) and 131-134 (NKID).

This sequence belongs to the TRAFAC class translation factor GTPase superfamily. Classic translation factor GTPase family. LepA subfamily.

The protein localises to the cell inner membrane. It catalyses the reaction GTP + H2O = GDP + phosphate + H(+). Its function is as follows. Required for accurate and efficient protein synthesis under certain stress conditions. May act as a fidelity factor of the translation reaction, by catalyzing a one-codon backward translocation of tRNAs on improperly translocated ribosomes. Back-translocation proceeds from a post-translocation (POST) complex to a pre-translocation (PRE) complex, thus giving elongation factor G a second chance to translocate the tRNAs correctly. Binds to ribosomes in a GTP-dependent manner. This chain is Elongation factor 4, found in Burkholderia cenocepacia (strain HI2424).